We begin with the raw amino-acid sequence, 766 residues long: Pentatricopeptide repeat-containing protein At5g28460 (766 aa).

16 PPR repeats span residues 151–181, 184–218, 221–257, 258–292, 293–327, 328–358, 369–404, 405–439, 440–474, 475–509, 510–544, 545–579, 580–614, 615–650, 651–685, and 686–720; these read TIVATKLLIRWFGRMGMVNQSVLVYERLDSN, NSQVRNVVVDVLLRNGLVDDAFKVLDEMLQKESVF, NRITADIVLHEVWKERLLTEEKIIALISRFSSHGVSP, NSVWLTRFISSLCKNARANTAWDILSDLMKNKTPL, EAPPFNALLSCLGRNMDISRMNDLVLKMDEVKIRP, DVVTLGILINTLCKSRRVDEALEVFEQMRGK, DSIHFNTLIDGLCKVGRLKEAEELLVRMKLEERCVP, NAVTYNCLIDGYCRAGKLETAKEVVSRMKEDEIKP, NVVTVNTIVGGMCRHHGLNMAVVFFMDMEKEGVKG, NVVTYMTLIHACCSVSNVEKAMYWYEKMLEAGCSP, DAKIYYALISGLCQVRRDHDAIRVVEKLKEGGFSL, DLLAYNMLIGLFCDKNNAEKVYEMLTDMEKEGKKP, DSITYNTLISFFGKHKDFESVERMMEQMREDGLDP, TVTTYGAVIDAYCSVGELDEALKLFKDMGLHSKVNP, NTVIYNILINAFSKLGNFGQALSLKEEMKMKMVRP, and NVETYNALFKCLNEKTQGETLLKLMDEMVEQSCEP.

It belongs to the PPR family. P subfamily.

The polypeptide is Pentatricopeptide repeat-containing protein At5g28460 (Arabidopsis thaliana (Mouse-ear cress)).